The following is a 353-amino-acid chain: T-complex protein 1 subunit eta (353 aa).

The protein belongs to the TCP-1 chaperonin family. Heterooligomeric complex of about 850 to 900 kDa that forms two stacked rings, 12 to 16 nm in diameter.

The protein resides in the cytoplasm. Molecular chaperone; assists the folding of proteins upon ATP hydrolysis. Known to play a role, in vitro, in the folding of actin and tubulin. The chain is T-complex protein 1 subunit eta from Tetrahymena thermophila.